A 196-amino-acid polypeptide reads, in one-letter code: Holliday junction branch migration complex subunit RuvA (196 aa).

The segment at 1-64 (MIDRLRGQLV…EDAMLLFGFA (64 aa)) is domain I. Residues 65-143 (TREEREAFDA…AAAGGGGGVA (79 aa)) are domain II. Residues 144 to 153 (AGEGDGPFME) form a flexible linker region. The interval 153-196 (EAREALTGLGYSLEEAERALRDVPPQETVEQYIKAALRKIGGRR) is domain III.

This sequence belongs to the RuvA family. As to quaternary structure, homotetramer. Forms an RuvA(8)-RuvB(12)-Holliday junction (HJ) complex. HJ DNA is sandwiched between 2 RuvA tetramers; dsDNA enters through RuvA and exits via RuvB. An RuvB hexamer assembles on each DNA strand where it exits the tetramer. Each RuvB hexamer is contacted by two RuvA subunits (via domain III) on 2 adjacent RuvB subunits; this complex drives branch migration. In the full resolvosome a probable DNA-RuvA(4)-RuvB(12)-RuvC(2) complex forms which resolves the HJ.

It localises to the cytoplasm. Functionally, the RuvA-RuvB-RuvC complex processes Holliday junction (HJ) DNA during genetic recombination and DNA repair, while the RuvA-RuvB complex plays an important role in the rescue of blocked DNA replication forks via replication fork reversal (RFR). RuvA specifically binds to HJ cruciform DNA, conferring on it an open structure. The RuvB hexamer acts as an ATP-dependent pump, pulling dsDNA into and through the RuvAB complex. HJ branch migration allows RuvC to scan DNA until it finds its consensus sequence, where it cleaves and resolves the cruciform DNA. The chain is Holliday junction branch migration complex subunit RuvA from Rubrobacter xylanophilus (strain DSM 9941 / JCM 11954 / NBRC 16129 / PRD-1).